Consider the following 290-residue polypeptide: Light-independent protochlorophyllide reductase iron-sulfur ATP-binding protein (290 aa).

ATP is bound by residues 10–15 (GIGKST) and Lys39. Ser14 lines the Mg(2+) pocket. [4Fe-4S] cluster is bound by residues Cys95 and Cys129. 180-181 (NR) contributes to the ATP binding site.

It belongs to the NifH/BchL/ChlL family. In terms of assembly, homodimer. Protochlorophyllide reductase is composed of three subunits; ChlL, ChlN and ChlB. The cofactor is [4Fe-4S] cluster.

Its subcellular location is the plastid. It is found in the chloroplast. The catalysed reaction is chlorophyllide a + oxidized 2[4Fe-4S]-[ferredoxin] + 2 ADP + 2 phosphate = protochlorophyllide a + reduced 2[4Fe-4S]-[ferredoxin] + 2 ATP + 2 H2O. Its pathway is porphyrin-containing compound metabolism; chlorophyll biosynthesis (light-independent). In terms of biological role, component of the dark-operative protochlorophyllide reductase (DPOR) that uses Mg-ATP and reduced ferredoxin to reduce ring D of protochlorophyllide (Pchlide) to form chlorophyllide a (Chlide). This reaction is light-independent. The L component serves as a unique electron donor to the NB-component of the complex, and binds Mg-ATP. The sequence is that of Light-independent protochlorophyllide reductase iron-sulfur ATP-binding protein from Porphyra purpurea (Red seaweed).